Reading from the N-terminus, the 217-residue chain is Small ribosomal subunit protein uS3 (217 aa).

In terms of domain architecture, KH type-2 spans 40-110 (IRDLINKGFN…EVYINIHEVR (71 aa)).

It belongs to the universal ribosomal protein uS3 family. Part of the 30S ribosomal subunit. Forms a tight complex with proteins S10 and S14.

Functionally, binds the lower part of the 30S subunit head. Binds mRNA in the 70S ribosome, positioning it for translation. The sequence is that of Small ribosomal subunit protein uS3 from Rickettsia akari (strain Hartford).